We begin with the raw amino-acid sequence, 317 residues long: MTDKLTSLRQYTTVVADTGDIAAMKLYQPQDATTNPSLILNAAQIPEYRKLIDDAVAWAKQQSNDRAQQIVDATDKLAVNIGLEILKLVPGRISTEVDARLSYDTEASIAKAKRLIKLYNDAGISNDRILIKLASTWQGIRAAEQLEKEGINCNLTLLFSFAQARACAEAGVFLISPFVGRILDWYKANTDKKEYAPAEDPGVVSVSEIYQYYKEHGYETVVMGASFRNIGEILELAGCDRLTIAPALLKELAESEGAIERKLSYTGEVKARPARITESEFLWQHNQDPMAVDKLAEGIRKFAVDQEKLEKMIGDLL.

The Schiff-base intermediate with substrate role is filled by lysine 132.

This sequence belongs to the transaldolase family. Type 1 subfamily. As to quaternary structure, homodimer.

Its subcellular location is the cytoplasm. It catalyses the reaction D-sedoheptulose 7-phosphate + D-glyceraldehyde 3-phosphate = D-erythrose 4-phosphate + beta-D-fructose 6-phosphate. It participates in carbohydrate degradation; pentose phosphate pathway; D-glyceraldehyde 3-phosphate and beta-D-fructose 6-phosphate from D-ribose 5-phosphate and D-xylulose 5-phosphate (non-oxidative stage): step 2/3. Transaldolase is important for the balance of metabolites in the pentose-phosphate pathway. The protein is Transaldolase of Shigella dysenteriae serotype 1 (strain Sd197).